A 752-amino-acid polypeptide reads, in one-letter code: Catalase-peroxidase (752 aa).

Positions 1-20 (MENELVSKVKAPVPGNQTNT) are disordered. Residues 111–234 (WHSAGTYRIG…LGAVQMGLIY (124 aa)) constitute a cross-link (tryptophyl-tyrosyl-methioninium (Trp-Tyr) (with M-260)). Catalysis depends on histidine 112, which acts as the Proton acceptor. The segment at residues 234 to 260 (YVNPEGPNGKPDPAAAAVDIRETFARM) is a cross-link (tryptophyl-tyrosyl-methioninium (Tyr-Met) (with W-111)). A heme b-binding site is contributed by histidine 275.

This sequence belongs to the peroxidase family. Peroxidase/catalase subfamily. As to quaternary structure, homodimer or homotetramer. It depends on heme b as a cofactor. Post-translationally, formation of the three residue Trp-Tyr-Met cross-link is important for the catalase, but not the peroxidase activity of the enzyme.

The enzyme catalyses H2O2 + AH2 = A + 2 H2O. The catalysed reaction is 2 H2O2 = O2 + 2 H2O. In terms of biological role, bifunctional enzyme with both catalase and broad-spectrum peroxidase activity. The polypeptide is Catalase-peroxidase (Koribacter versatilis (strain Ellin345)).